Consider the following 230-residue polypeptide: NAD(P)H-quinone oxidoreductase subunit K, chloroplastic (230 aa).

Residues Cys-43, Cys-44, Cys-108, and Cys-139 each contribute to the [4Fe-4S] cluster site.

It belongs to the complex I 20 kDa subunit family. In terms of assembly, NDH is composed of at least 16 different subunits, 5 of which are encoded in the nucleus. It depends on [4Fe-4S] cluster as a cofactor.

Its subcellular location is the plastid. The protein resides in the chloroplast thylakoid membrane. The enzyme catalyses a plastoquinone + NADH + (n+1) H(+)(in) = a plastoquinol + NAD(+) + n H(+)(out). The catalysed reaction is a plastoquinone + NADPH + (n+1) H(+)(in) = a plastoquinol + NADP(+) + n H(+)(out). NDH shuttles electrons from NAD(P)H:plastoquinone, via FMN and iron-sulfur (Fe-S) centers, to quinones in the photosynthetic chain and possibly in a chloroplast respiratory chain. The immediate electron acceptor for the enzyme in this species is believed to be plastoquinone. Couples the redox reaction to proton translocation, and thus conserves the redox energy in a proton gradient. The polypeptide is NAD(P)H-quinone oxidoreductase subunit K, chloroplastic (Lotus japonicus (Lotus corniculatus var. japonicus)).